Consider the following 156-residue polypeptide: Small ribosomal subunit protein uS7 (156 aa).

Belongs to the universal ribosomal protein uS7 family. As to quaternary structure, part of the 30S ribosomal subunit. Contacts proteins S9 and S11.

Its function is as follows. One of the primary rRNA binding proteins, it binds directly to 16S rRNA where it nucleates assembly of the head domain of the 30S subunit. Is located at the subunit interface close to the decoding center, probably blocks exit of the E-site tRNA. This chain is Small ribosomal subunit protein uS7, found in Prochlorococcus marinus (strain MIT 9301).